Consider the following 179-residue polypeptide: tRNA (cytidine(56)-2'-O)-methyltransferase (179 aa).

S-adenosyl-L-methionine is bound by residues Leu82, 112-116 (GAEKV), and 130-137 (VGNQPHSE).

This sequence belongs to the aTrm56 family. As to quaternary structure, homodimer.

It is found in the cytoplasm. It carries out the reaction cytidine(56) in tRNA + S-adenosyl-L-methionine = 2'-O-methylcytidine(56) in tRNA + S-adenosyl-L-homocysteine + H(+). Functionally, specifically catalyzes the AdoMet-dependent 2'-O-ribose methylation of cytidine at position 56 in tRNAs. This Methanococcus maripaludis (strain C6 / ATCC BAA-1332) protein is tRNA (cytidine(56)-2'-O)-methyltransferase.